The following is a 397-amino-acid chain: Phosphoglycerate kinase (397 aa).

Substrate-binding positions include aspartate 25 to asparagine 27, arginine 41, histidine 64 to arginine 67, arginine 118, and arginine 151. ATP is bound by residues lysine 202, glutamate 324, and glycine 350–threonine 353.

This sequence belongs to the phosphoglycerate kinase family. Monomer.

It is found in the cytoplasm. The catalysed reaction is (2R)-3-phosphoglycerate + ATP = (2R)-3-phospho-glyceroyl phosphate + ADP. Its pathway is carbohydrate degradation; glycolysis; pyruvate from D-glyceraldehyde 3-phosphate: step 2/5. The polypeptide is Phosphoglycerate kinase (Leptothrix cholodnii (strain ATCC 51168 / LMG 8142 / SP-6) (Leptothrix discophora (strain SP-6))).